Reading from the N-terminus, the 100-residue chain is Urease subunit gamma (100 aa).

Belongs to the urease gamma subunit family. As to quaternary structure, heterotrimer of UreA (gamma), UreB (beta) and UreC (alpha) subunits. Three heterotrimers associate to form the active enzyme.

The protein localises to the cytoplasm. It carries out the reaction urea + 2 H2O + H(+) = hydrogencarbonate + 2 NH4(+). The protein operates within nitrogen metabolism; urea degradation; CO(2) and NH(3) from urea (urease route): step 1/1. This Methylibium petroleiphilum (strain ATCC BAA-1232 / LMG 22953 / PM1) protein is Urease subunit gamma.